The chain runs to 705 residues: Polyribonucleotide nucleotidyltransferase (705 aa).

2 residues coordinate Mg(2+): D487 and D493. The region spanning 554–613 (PKILTMKINPDKIRDVIGPSGKQINKIIEDTGVKIDIEQDGTIFISSTEEDMNQKAKKII) is the KH domain. The S1 motif domain maps to 623–691 (GQLYLGKVKR…KQGRVNLSRK (69 aa)).

The protein belongs to the polyribonucleotide nucleotidyltransferase family. Mg(2+) is required as a cofactor.

Its subcellular location is the cytoplasm. It catalyses the reaction RNA(n+1) + phosphate = RNA(n) + a ribonucleoside 5'-diphosphate. Its function is as follows. Involved in mRNA degradation. Catalyzes the phosphorolysis of single-stranded polyribonucleotides processively in the 3'- to 5'-direction. In Bacillus pumilus (strain SAFR-032), this protein is Polyribonucleotide nucleotidyltransferase.